Here is a 295-residue protein sequence, read N- to C-terminus: 33 kDa chaperonin (295 aa).

Disulfide bonds link Cys-237–Cys-239 and Cys-270–Cys-273.

The protein belongs to the HSP33 family. Under oxidizing conditions two disulfide bonds are formed involving the reactive cysteines. Under reducing conditions zinc is bound to the reactive cysteines and the protein is inactive.

It localises to the cytoplasm. Functionally, redox regulated molecular chaperone. Protects both thermally unfolding and oxidatively damaged proteins from irreversible aggregation. Plays an important role in the bacterial defense system toward oxidative stress. This is 33 kDa chaperonin from Symbiobacterium thermophilum (strain DSM 24528 / JCM 14929 / IAM 14863 / T).